The primary structure comprises 116 residues: Probable transcriptional regulator WhiB6 (116 aa).

[4Fe-4S] cluster is bound by residues Cys12, Cys53, Cys56, and Cys62. The 54-residue stretch at 33–86 (VCTQDPDRWTTTPDDEAKTLCRACPRRWLCARDAVESAGAEGLWAGVVIPESGR) folds into the 4Fe-4S Wbl-type domain.

It belongs to the WhiB family. Requires [4Fe-4S] cluster as cofactor. Post-translationally, the Fe-S cluster can be nitrosylated by nitric oxide (NO). In terms of processing, upon Fe-S cluster removal intramolecular disulfide bonds are formed.

The protein resides in the cytoplasm. Its function is as follows. Acts as a transcriptional regulator. Probably redox-responsive. The apo- but not holo-form probably binds DNA. The chain is Probable transcriptional regulator WhiB6 (whiB6) from Mycobacterium tuberculosis (strain CDC 1551 / Oshkosh).